Reading from the N-terminus, the 190-residue chain is Threonylcarbamoyl-AMP synthase (190 aa).

The region spanning 7 to 190 is the YrdC-like domain; that stretch reads SEAVAHAVAV…ALTGELFRQG (184 aa).

The protein belongs to the SUA5 family. TsaC subfamily.

The protein localises to the cytoplasm. It carries out the reaction L-threonine + hydrogencarbonate + ATP = L-threonylcarbamoyladenylate + diphosphate + H2O. Required for the formation of a threonylcarbamoyl group on adenosine at position 37 (t(6)A37) in tRNAs that read codons beginning with adenine. Catalyzes the conversion of L-threonine, HCO(3)(-)/CO(2) and ATP to give threonylcarbamoyl-AMP (TC-AMP) as the acyladenylate intermediate, with the release of diphosphate. The polypeptide is Threonylcarbamoyl-AMP synthase (Klebsiella pneumoniae subsp. pneumoniae (strain ATCC 700721 / MGH 78578)).